A 418-amino-acid chain; its full sequence is 3-isopropylmalate dehydratase large subunit (418 aa).

The [4Fe-4S] cluster site is built by C299, C359, and C362.

Belongs to the aconitase/IPM isomerase family. LeuC type 2 subfamily. Heterodimer of LeuC and LeuD. [4Fe-4S] cluster is required as a cofactor.

The enzyme catalyses (2R,3S)-3-isopropylmalate = (2S)-2-isopropylmalate. It participates in amino-acid biosynthesis; L-leucine biosynthesis; L-leucine from 3-methyl-2-oxobutanoate: step 2/4. Its function is as follows. Catalyzes the isomerization between 2-isopropylmalate and 3-isopropylmalate, via the formation of 2-isopropylmaleate. This chain is 3-isopropylmalate dehydratase large subunit, found in Nitratidesulfovibrio vulgaris (strain DSM 19637 / Miyazaki F) (Desulfovibrio vulgaris).